Consider the following 372-residue polypeptide: Alpha-parvin (372 aa).

Over residues 1-11 (MATSPQKSPSV) the composition is skewed to low complexity. The segment at 1 to 45 (MATSPQKSPSVPKSPTPKSPPSRKKDDSFLGKLGGTLARRKKAKE) is disordered. Position 2 is an N-acetylalanine (Ala-2). Ser-8, Ser-14, and Ser-19 each carry phosphoserine. The interaction with ARHGAP31 stretch occupies residues 21–25 (PSRKK). Residues Ser-28 and Ser-62 each carry the phosphoserine modification. Calponin-homology (CH) domains are found at residues 95–202 (QELM…QYFR) and 262–369 (NVVK…TKYR). Positions 223–372 (GILQSRQIQE…NLFTKYRNVE (150 aa)) are required for interaction with TESK1 and ILK.

This sequence belongs to the parvin family. In terms of assembly, component of the heterotrimeric IPP (ILK-PINCH-PARVIN) complex composed of ILK, LIMS1/PINCH and PARVA; the complex binds to F-actin via the C-terminal tail of LIMS1 and the N-terminal region of PARVA, promoting F-actin filament bundling. Formation of the IPP complex is dependent on protein kinase C and precedes integrin-mediated cell adhesion and spreading. Interacts with TGFB1I1. Interacts with ARHGAP31. Interacts with the actin cytoskeleton. Interacts (via C-terminus) with TESK1 (via C-terminus); the interaction inhibits TESK1 kinase activity. Interacts with PXN/PAXILLIN (via LD motif 4). As to expression, widely expressed, with highest levels in heart, skeletal muscle, kidney and liver.

Its subcellular location is the cell junction. The protein localises to the focal adhesion. It is found in the cell membrane. It localises to the cytoplasm. The protein resides in the cytoskeleton. Its subcellular location is the myofibril. The protein localises to the sarcomere. It is found in the z line. Plays a role in sarcomere organization and in smooth muscle cell contraction. Required for normal development of the embryonic cardiovascular system, and for normal septation of the heart outflow tract. Plays a role in sprouting angiogenesis and is required for normal adhesion of vascular smooth muscle cells to endothelial cells during blood vessel development. Plays a role in the reorganization of the actin cytoskeleton, formation of lamellipodia and ciliogenesis. Plays a role in the establishment of cell polarity, cell adhesion, cell spreading, and directed cell migration. Within the IPP (ILK-PINCH-PARVIN) complex, binds to F-actin, promoting F-actin bundling, a process required to generate force for actin cytoskeleton reorganization and subsequent dynamic cell adhesion events such as cell spreading and migration. In Homo sapiens (Human), this protein is Alpha-parvin (PARVA).